Consider the following 1200-residue polypeptide: Zinc finger protein 804A (1200 aa).

Residues 57-81 (FYCELCDKQYYKHQEFDNHINSYDH) form a C2H2-type zinc finger. Disordered stretches follow at residues 252-280 (STSH…PEAM), 343-367 (DGPV…RTSA), 582-687 (HWFH…NCGG), 727-777 (EDDG…SDES), 799-828 (QPKK…NYPM), and 874-949 (PYNP…TNPE). Residues 585-603 (HKSRRKKKRRKLCRYHPGK) are compositionally biased toward basic residues. A compositionally biased stretch (basic and acidic residues) spans 604 to 666 (SSKEPEGSGK…ASTHLGEKET (63 aa)). 2 stretches are compositionally biased toward polar residues: residues 667 to 687 (MNTT…NCGG) and 732 to 756 (LASQ…SLTN). Over residues 800–811 (PKKKRRRKRSRL) the composition is skewed to basic residues. A compositionally biased stretch (polar residues) spans 891 to 944 (TETTPCDSSQTSNDLATPVNVTRDPSNSTTDNTLLEHNQRSQTTNSNEKQTPFK).

This is Zinc finger protein 804A (Znf804a) from Mus musculus (Mouse).